We begin with the raw amino-acid sequence, 243 residues long: Pyridoxine 5'-phosphate synthase (243 aa).

3-amino-2-oxopropyl phosphate is bound at residue N9. 1-deoxy-D-xylulose 5-phosphate is bound at residue 11–12 (DH). 3-amino-2-oxopropyl phosphate is bound at residue R20. H45 acts as the Proton acceptor in catalysis. 2 residues coordinate 1-deoxy-D-xylulose 5-phosphate: R47 and H52. The active-site Proton acceptor is the E72. T102 lines the 1-deoxy-D-xylulose 5-phosphate pocket. H193 serves as the catalytic Proton donor. 3-amino-2-oxopropyl phosphate contacts are provided by residues G194 and 215 to 216 (GH).

Belongs to the PNP synthase family. In terms of assembly, homooctamer; tetramer of dimers.

It localises to the cytoplasm. It catalyses the reaction 3-amino-2-oxopropyl phosphate + 1-deoxy-D-xylulose 5-phosphate = pyridoxine 5'-phosphate + phosphate + 2 H2O + H(+). Its pathway is cofactor biosynthesis; pyridoxine 5'-phosphate biosynthesis; pyridoxine 5'-phosphate from D-erythrose 4-phosphate: step 5/5. In terms of biological role, catalyzes the complicated ring closure reaction between the two acyclic compounds 1-deoxy-D-xylulose-5-phosphate (DXP) and 3-amino-2-oxopropyl phosphate (1-amino-acetone-3-phosphate or AAP) to form pyridoxine 5'-phosphate (PNP) and inorganic phosphate. This is Pyridoxine 5'-phosphate synthase from Vibrio parahaemolyticus serotype O3:K6 (strain RIMD 2210633).